Here is a 329-residue protein sequence, read N- to C-terminus: 3'-5' exonuclease (329 aa).

The tract at residues 26 to 88 (EEKPKPKKVV…MADVGTPSPE (63 aa)) is disordered. Residues 46–65 (KNLDTPEIVNKENAEVENPP) are compositionally biased toward basic and acidic residues. Phosphoserine occurs at positions 78 and 86. The 3'-5' exonuclease domain occupies 130–288 (TEIVPMAFDM…IGQVIYREIE (159 aa)). Positions 138, 140, and 276 each coordinate Mg(2+).

It belongs to the WRNexo family.

It localises to the nucleus. Functionally, has exonuclease activity on both single-stranded and duplex templates bearing overhangs, but not blunt ended duplex DNA, and cleaves in a 3'-5' direction. Essential for the formation of DNA replication focal centers. Has an important role in maintaining genome stability. The protein is 3'-5' exonuclease of Drosophila mojavensis (Fruit fly).